The sequence spans 374 residues: DNA-directed RNA polymerase subunit alpha (374 aa).

The segment at 1–270 (MIFDEDSSSV…DQFQQFINFD (270 aa)) is alpha N-terminal domain (alpha-NTD). An alpha C-terminal domain (alpha-CTD) region spans residues 282–374 (KDVLPYDSNL…ESLSKQYSEE (93 aa)).

Belongs to the RNA polymerase alpha chain family. Homodimer. The RNAP catalytic core consists of 2 alpha, 1 beta, 1 beta' and 1 omega subunit. When a sigma factor is associated with the core the holoenzyme is formed, which can initiate transcription.

The enzyme catalyses RNA(n) + a ribonucleoside 5'-triphosphate = RNA(n+1) + diphosphate. Functionally, DNA-dependent RNA polymerase catalyzes the transcription of DNA into RNA using the four ribonucleoside triphosphates as substrates. This chain is DNA-directed RNA polymerase subunit alpha, found in Ehrlichia ruminantium (strain Gardel).